Consider the following 55-residue polypeptide: Large ribosomal subunit protein bL33 (55 aa).

It belongs to the bacterial ribosomal protein bL33 family.

The sequence is that of Large ribosomal subunit protein bL33 from Vibrio cholerae serotype O1 (strain ATCC 39541 / Classical Ogawa 395 / O395).